Here is a 221-residue protein sequence, read N- to C-terminus: Very-long-chain (3R)-3-hydroxyacyl-CoA dehydratase PASTICCINO 2A (221 aa).

The Cytoplasmic segment spans residues 1–11 (MAGVGSAVRRL). The helical transmembrane segment at 12 to 32 (YLSVYNWAVFFGWAQVLYYAV) threads the bilayer. Residues 33-51 (TTLLESGHEAVYAAVERPL) are Lumenal-facing. A helical membrane pass occupies residues 52–70 (QFAQTAAFLEILHGLVGLV). Topologically, residues 71–76 (RSPVSA) are cytoplasmic. A helical membrane pass occupies residues 77–95 (TLPQIGSRLFLTWGILWSF). The Lumenal portion of the chain corresponds to 96–100 (PETHS). A helical membrane pass occupies residues 101-121 (HILVTSLVISWSITEIIRYSF). Residues 122–141 (FGMKEAFGFAPSWLLWLRYS) lie on the Cytoplasmic side of the membrane. A helical transmembrane segment spans residues 142–165 (TFMVLYPTGISSEVGLIYIALPYM). Catalysis depends on residues tyrosine 147 and glutamate 154. Over 166–184 (KASEKYCLRMPNKWNFSFD) the chain is Lumenal. Residues 185-209 (FFYASILSLAIYVPGSPHMFTYMLA) form a helical membrane-spanning segment. The Cytoplasmic portion of the chain corresponds to 210 to 221 (QRKKALAKAKAA).

Belongs to the very long-chain fatty acids dehydratase HACD family.

It localises to the endoplasmic reticulum membrane. It catalyses the reaction a very-long-chain (3R)-3-hydroxyacyl-CoA = a very-long-chain (2E)-enoyl-CoA + H2O. It functions in the pathway lipid metabolism; fatty acid biosynthesis. In terms of biological role, catalyzes the third of the four reactions of the long-chain fatty acids elongation cycle. This endoplasmic reticulum-bound enzymatic process, allows the addition of two carbons to the chain of long- and very long-chain fatty acids/VLCFAs per cycle. This enzyme catalyzes the dehydration of the 3-hydroxyacyl-CoA intermediate into trans-2,3-enoyl-CoA, within each cycle of fatty acid elongation. Thereby, it participates in the production of VLCFAs of different chain lengths that are involved in multiple biological processes as precursors of membrane lipids and lipid mediators. May be an anti-phosphatase that prevents CDKA-1 dephosphorylation and activation. Involved in the hormonal control of cell division and differentiation. Required for proliferation control of meristematic and non-meristematic cells. Negative regulator of the cell cycle. In Oryza sativa subsp. japonica (Rice), this protein is Very-long-chain (3R)-3-hydroxyacyl-CoA dehydratase PASTICCINO 2A (PAS2A).